The chain runs to 901 residues: Putative serine/threonine-protein kinase YPL150W (901 aa).

The region spanning 41 to 287 (YKILKQIGEG…LSQVLRHPFL (247 aa)) is the Protein kinase domain. ATP is bound by residues 47–55 (IGEGSFGKV) and Lys70. The Proton acceptor role is filled by Asp157. Position 456 is a phosphoserine (Ser456). The segment at 500 to 530 (APSSGSFLKKNSGSIQKSRTDTVANPSRTES) is disordered. The residue at position 533 (Ser533) is a Phosphoserine. Positions 588–599 (SSISSEISQTST) are enriched in low complexity. 2 disordered regions span residues 588-629 (SSIS…NRPL) and 745-770 (TQRP…SSKR). The span at 600–613 (GNYDSESAENSRSI) shows a compositional bias: polar residues. The segment covering 759 to 770 (RHGKNARRSSKR) has biased composition (basic residues).

Belongs to the protein kinase superfamily. Ser/Thr protein kinase family.

It carries out the reaction L-seryl-[protein] + ATP = O-phospho-L-seryl-[protein] + ADP + H(+). It catalyses the reaction L-threonyl-[protein] + ATP = O-phospho-L-threonyl-[protein] + ADP + H(+). Functionally, putative serine/threonine-protein kinase. The sequence is that of Putative serine/threonine-protein kinase YPL150W from Saccharomyces cerevisiae (strain ATCC 204508 / S288c) (Baker's yeast).